The sequence spans 1205 residues: MTDVSSPAGGAASPVEMTTSSSPAATTSASSSKPLTNGANKTTISTTAGGVAPGDVPGTGSGAIPASSSSGNQVKLEHHHRQSNNNRPAATNRSSETKLRSPAGESDGASRLMTPAGSSSSPSQSPSQTQASIQTQTSQQDRLTKASTTASQQDVDEVARLFEEKPEAFEKWLTERAPPEALSRLQEFIENRKPHKRPSVTSDLFQQWMAASPTVQQKSPRSLSNSSASSLPECRRHLMDLDEGELFMELIRDVANELDIDVLCHKILVNVGLLTHADRGSLFLAKGTPTNKYLVAKLFDVTQKTALKDAVARASAEEIIIPFGIGIAGMVAQTKQMINIKEAYKDARFNCEIDLKTGYKTNAILCMPICNYEGDIIGVAQIINKTNGCMEFDEHDVEIFRRYLTFCGIGIQNAQLFEMSVQEYRRNQILLNLARSIFEEQNNLECLVTKIMTEARELLKCERCSVFLVDLDCCEASHLEKIIEKPNQPATRAIKSADSFEEKKMRNRFTVLFELGGEYQAANVSRPSVSELSSSTLAQIAQFVATTGQTVNICDVIEWVRDHNQIRAEDEIDSTQAILCMPIMNAQKKVIGVAQLINKANGVPFTDSDASIFEAFAIFCGLGIHNTQMYENACKLMAKQKVALECLSYHATASQDQTEKLTQDVIAEAESYNLYSFTFTDFELVDDDTCRAVLRMFMQCNLVSQFQIPYDVLCRWVLSVRKNYRPVKYHNWRHALNVAQTMFAMLKTGKMERFMTDLEILGLLVACLCHDLDHRGTNNAFQTKTESPLAILYTTSTMEHHHFDQCVMILNSEGNNIFQTGFAGLGAGTFGSGRGTGGGSNSNFPGDRVLQIARRTIFFFVPELDAEDDVVDSVVDSVVELSVVVLVLDSVLVAALSPEDYRSVMKTVESAILSTDLAMYFKKRNAFLELVENGEFDWQGEEKKDLLCGMMMTACDVSAIAKPWEVQHKVAKLVADEFFDQGDLEKLQLNTQPVAMMDRERKDELPKMQVGFIDVICLPLYRVLCDTFPWITPLYEGTLENRRNWQDLAEKVEMGLTWIDHDTIDKPVEEFAACADEEIKDIEFTVTTLNCNQQSQHGSEDSHTPEHQRSGSRLSMKKTGALGKAVRSKLSKTLYNSMDGSKPKTSLKLLESHVSEDMDDKSPTSPSQPQASGSMGRMSASSSTSSAGGQMVDKSKKRSKLCALL.

The disordered stretch occupies residues 1-153; that stretch reads MTDVSSPAGG…TKASTTASQQ (153 aa). Residues 18 to 32 are compositionally biased toward low complexity; the sequence is TTSSSPAATTSASSS. The span at 33–48 shows a compositional bias: polar residues; that stretch reads KPLTNGANKTTISTTA. Residues 62 to 71 show a composition bias toward low complexity; it reads GAIPASSSSG. Positions 83–94 are enriched in polar residues; sequence SNNNRPAATNRS. The span at 118–140 shows a compositional bias: low complexity; the sequence is SSSSPSQSPSQTQASIQTQTSQQ. GAF domains lie at 259–411 and 443–624; these read DIDV…GIGI and NLEC…GLGI. Positions 654–1052 constitute a PDEase domain; it reads SQDQTEKLTQ…RNWQDLAEKV (399 aa). His730 acts as the Proton donor in catalysis. Positions 734, 770, 771, and 956 each coordinate a divalent metal cation. Disordered stretches follow at residues 1093–1122 and 1152–1205; these read QQSQ…TGAL and SHVS…CALL. 2 stretches are compositionally biased toward basic and acidic residues: residues 1098–1109 and 1152–1162; these read GSEDSHTPEHQR and SHVSEDMDDKS. Positions 1171–1191 are enriched in low complexity; sequence ASGSMGRMSASSSTSSAGGQM. The span at 1195–1205 shows a compositional bias: basic residues; that stretch reads SKKRSKLCALL. The residue at position 1202 (Cys1202) is a Cysteine methyl ester. Cys1202 carries the S-farnesyl cysteine lipid modification. The propeptide at 1203 to 1205 is removed in mature form; it reads ALL.

Belongs to the cyclic nucleotide phosphodiesterase family. Interacts with PrBP. A divalent metal cation is required as a cofactor.

It localises to the cell membrane. It carries out the reaction 3',5'-cyclic GMP + H2O = GMP + H(+). Functionally, has a role regulating cGMP transport in Malpighian tubule principal cells. The chain is cGMP-specific 3',5'-cyclic phosphodiesterase from Drosophila sechellia (Fruit fly).